The sequence spans 244 residues: Ureidoacrylate amidohydrolase RutB (244 aa).

Asp38 functions as the Proton acceptor in the catalytic mechanism. Lys147 is an active-site residue. Cys180 acts as the Nucleophile in catalysis.

This sequence belongs to the isochorismatase family. RutB subfamily.

It catalyses the reaction (Z)-3-ureidoacrylate + H2O + H(+) = (Z)-3-aminoacrylate + NH4(+) + CO2. The catalysed reaction is (Z)-3-ureidoacrylate + H2O = (Z)-3-aminoacrylate + carbamate + H(+). It carries out the reaction (Z)-2-methylureidoacrylate + H2O + H(+) = (Z)-2-methylaminoacrylate + NH4(+) + CO2. Its function is as follows. Hydrolyzes ureidoacrylate to form aminoacrylate and carbamate. The carbamate hydrolyzes spontaneously, thereby releasing one of the nitrogen atoms of the pyrimidine ring as ammonia and one of its carbon atoms as CO2. In Escherichia coli O6:H1 (strain CFT073 / ATCC 700928 / UPEC), this protein is Ureidoacrylate amidohydrolase RutB.